The sequence spans 446 residues: AP-2 complex subunit mu (446 aa).

Phosphoserine occurs at positions 145, 151, and 152. Phosphothreonine is present on T157. Residues 177-445 (KNSIYIDIVE…STRAGTCEIR (269 aa)) enclose the MHD domain.

Belongs to the adaptor complexes medium subunit family. Adaptor protein complex 2 (AP-2) is a heterotetramer composed of two large adaptins (alpha-type subunit apl3 and beta-type subunit apl1), a medium chain (mu-type subunit apm4) and a small adaptin (sigma-type subunit aps2).

The protein resides in the cell membrane. It is found in the membrane. The protein localises to the coated pit. In terms of biological role, component of the adaptor complexes which link clathrin to receptors in coated vesicles. Clathrin-associated protein complexes are believed to interact with the cytoplasmic tails of membrane proteins, leading to their selection and concentration. AP50 is a subunit of the plasma membrane adaptor (Potential). This is AP-2 complex subunit mu (apm4) from Schizosaccharomyces pombe (strain 972 / ATCC 24843) (Fission yeast).